Reading from the N-terminus, the 173-residue chain is Peptide deformylase (173 aa).

Residues Cys-94 and His-136 each coordinate Fe cation. Glu-137 is a catalytic residue. Residue His-140 coordinates Fe cation.

It belongs to the polypeptide deformylase family. The cofactor is Fe(2+).

It catalyses the reaction N-terminal N-formyl-L-methionyl-[peptide] + H2O = N-terminal L-methionyl-[peptide] + formate. Its function is as follows. Removes the formyl group from the N-terminal Met of newly synthesized proteins. Requires at least a dipeptide for an efficient rate of reaction. N-terminal L-methionine is a prerequisite for activity but the enzyme has broad specificity at other positions. The polypeptide is Peptide deformylase (Desulfosudis oleivorans (strain DSM 6200 / JCM 39069 / Hxd3) (Desulfococcus oleovorans)).